A 276-amino-acid polypeptide reads, in one-letter code: Eukaryotic translation initiation factor 3 subunit G-2 (276 aa).

An RRM domain is found at 196-274 (SAVRISNLSE…LILCVEWSKP (79 aa)).

Belongs to the eIF-3 subunit G family. Component of the eukaryotic translation initiation factor 3 (eIF-3) complex. The eIF-3 complex interacts with pix.

Its subcellular location is the cytoplasm. Functionally, RNA-binding component of the eukaryotic translation initiation factor 3 (eIF-3) complex, which is involved in protein synthesis of a specialized repertoire of mRNAs and, together with other initiation factors, stimulates binding of mRNA and methionyl-tRNAi to the 40S ribosome. The eIF-3 complex specifically targets and initiates translation of a subset of mRNAs involved in cell proliferation. This subunit can bind 18S rRNA. The chain is Eukaryotic translation initiation factor 3 subunit G-2 from Drosophila persimilis (Fruit fly).